We begin with the raw amino-acid sequence, 829 residues long: Probable beta-glucosidase H (829 aa).

N13 is a glycosylation site (N-linked (GlcNAc...) asparagine). The active site involves D225. N-linked (GlcNAc...) asparagine glycosylation is found at N304, N473, N602, N627, and N664. In terms of domain architecture, PA14 spans 389–548 (RMLSNAVIHF…DPEQMVANAV (160 aa)).

It belongs to the glycosyl hydrolase 3 family.

The protein resides in the secreted. It carries out the reaction Hydrolysis of terminal, non-reducing beta-D-glucosyl residues with release of beta-D-glucose.. It participates in glycan metabolism; cellulose degradation. In terms of biological role, beta-glucosidases are one of a number of cellulolytic enzymes involved in the degradation of cellulosic biomass. Catalyzes the last step releasing glucose from the inhibitory cellobiose. In Aspergillus fumigatus (strain ATCC MYA-4609 / CBS 101355 / FGSC A1100 / Af293) (Neosartorya fumigata), this protein is Probable beta-glucosidase H (bglH).